The primary structure comprises 248 residues: Ubiquinone/menaquinone biosynthesis C-methyltransferase UbiE (248 aa).

S-adenosyl-L-methionine is bound by residues Ser68 and Asp92.

This sequence belongs to the class I-like SAM-binding methyltransferase superfamily. MenG/UbiE family.

The catalysed reaction is a 2-demethylmenaquinol + S-adenosyl-L-methionine = a menaquinol + S-adenosyl-L-homocysteine + H(+). The enzyme catalyses a 2-methoxy-6-(all-trans-polyprenyl)benzene-1,4-diol + S-adenosyl-L-methionine = a 5-methoxy-2-methyl-3-(all-trans-polyprenyl)benzene-1,4-diol + S-adenosyl-L-homocysteine + H(+). Its pathway is quinol/quinone metabolism; menaquinone biosynthesis; menaquinol from 1,4-dihydroxy-2-naphthoate: step 2/2. It functions in the pathway cofactor biosynthesis; ubiquinone biosynthesis. Functionally, methyltransferase required for the conversion of demethylmenaquinol (DMKH2) to menaquinol (MKH2) and the conversion of 2-polyprenyl-6-methoxy-1,4-benzoquinol (DDMQH2) to 2-polyprenyl-3-methyl-6-methoxy-1,4-benzoquinol (DMQH2). In Rickettsia rickettsii (strain Iowa), this protein is Ubiquinone/menaquinone biosynthesis C-methyltransferase UbiE.